The following is a 585-amino-acid chain: MAEIQTAQNPLKELEKILERNNKQKNKKSRNQVRREKKKLLREKTNSGAKLAEKNSDDKDQLTENNDNLYNDKKSNGNFYDTNKTDSVDGMVYTTIVDSVELDPNDPLIEQFKDVFNRFKADGQEKDFEDTDKGQIMYSDDEILSEGEEDALQKQQEEKLSKKKLRKLKRMTVAQLKMLSEKADVVEWWDVSSLDPLFLTHLKAYPNTVPVPRHWNQKRDYLSGQRGIERQLFELPSYIRATGIVQMRNAVHENEADMPLRQKMRERVQPKMGKLDIDYQKLHDAFFRYQTKPVLTGFGECYFEGKELEADVKEKRPGDISEELREALGIAPGAPPPWLFAMQRYGPPPSYPDLKIPGVNCPIPTGAQWGFHPGGWGKPPVDQFNRPLYGDVFGNVKPRIHAGTGSPVSTQHWGELEEFEEEESSEEEESEDVEYPTEEITERETIEEYQSASEPRSQREDLHAEPLTYFNQSNVEVDNVELRKNTQPSSDAANRDLYQVLPEKSTNISGFMGPQHQYDIPTAEDTLPQKRNAHSMLSSTNKGDVALNQSSNWQDELSELVSEQAMKVGAAKRQKTQSKRDKFRL.

A coiled-coil region spans residues 1–74 (MAEIQTAQNP…NNDNLYNDKK (74 aa)). The segment at 1 to 84 (MAEIQTAQNP…SNGNFYDTNK (84 aa)) is disordered. The span at 12–22 (KELEKILERNN) shows a compositional bias: basic and acidic residues. The segment covering 23–41 (KQKNKKSRNQVRREKKKLL) has biased composition (basic residues). The span at 51–62 (LAEKNSDDKDQL) shows a compositional bias: basic and acidic residues. A Phosphoserine modification is found at S145. Residues 400-460 (IHAGTGSPVS…SASEPRSQRE (61 aa)) are disordered. Over residues 416–439 (LEEFEEEESSEEEESEDVEYPTEE) the composition is skewed to acidic residues.

As to quaternary structure, belongs to the 40S cdc5-associated complex (or cwf complex), a spliceosome sub-complex reminiscent of a late-stage spliceosome composed of the U2, U5 and U6 snRNAs and at least brr2, cdc5, cwf2/prp3, cwf3/syf1, cwf4/syf3, cwf5/ecm2, spp42/cwf6, cwf7/spf27, cwf8, cwf9, cwf10, cwf11, cwf12, prp45/cwf13, cwf14, cwf15, cwf16, cwf17, cwf18, cwf19, cwf20, cwf21, cwf22, cwf23, cwf24, cwf25, cwf26, cyp7/cwf27, cwf28, cwf29/ist3, lea1, msl1, prp5/cwf1, prp10/sap155, prp12/sap130, prp17, prp22, sap61, sap62, sap114, sap145, slu7, smb1, smd1, smd3, smf1, smg1 and syf2. Sap145 is part of the SF3b subcomplex of the Prp19-associated nineteen complex (NTC), composed of ini1, prp10, prp12/sap130, sap10/sap155, sap14, sap49 and sap145. Part of the U2 snRNP.

The protein resides in the nucleus. It is found in the cytoplasm. Involved in pre-mRNA splicing. May be involved in endoplasmic reticulum-associated protein degradation (ERAD) and required for growth at low and high temperatures. The chain is Pre-mRNA-splicing factor sap145 (sap145) from Schizosaccharomyces pombe (strain 972 / ATCC 24843) (Fission yeast).